Reading from the N-terminus, the 462-residue chain is Nuclear factor interleukin-3-regulated protein (462 aa).

Lys24 participates in a covalent cross-link: Glycyl lysine isopeptide (Lys-Gly) (interchain with G-Cter in SUMO2). Positions 73–136 (DAMYWEKRRK…GLISSTAYAQ (64 aa)) constitute a bZIP domain. The interval 79–95 (KRRKNNEAAKRSREKRR) is basic motif. The tract at residues 99–106 (LVLENKLI) is leucine-zipper. Disordered stretches follow at residues 189–237 (DVSE…DDRG) and 258–302 (SPPL…IHSP). The segment covering 201–210 (ESSVQGSCRS) has biased composition (polar residues). A Glycyl lysine isopeptide (Lys-Gly) (interchain with G-Cter in SUMO2) cross-link involves residue Lys214. Residue Lys219 forms a Glycyl lysine isopeptide (Lys-Gly) (interchain with G-Cter in SUMO1); alternate linkage. Residue Lys219 forms a Glycyl lysine isopeptide (Lys-Gly) (interchain with G-Cter in SUMO2); alternate linkage. The span at 227 to 237 (SYTREPRDDRG) shows a compositional bias: basic and acidic residues. Residues 264–274 (VNRSSSNSPRT) are compositionally biased toward polar residues. A necessary for transcriptional repression and sufficient for interaction with DR1 region spans residues 299–363 (IHSPVELKHV…PIDMTSKRHF (65 aa)). Ser301 is modified (phosphoserine). Glycyl lysine isopeptide (Lys-Gly) (interchain with G-Cter in SUMO2) cross-links involve residues Lys306, Lys314, Lys326, Lys332, Lys337, and Lys350. The residue at position 353 (Ser353) is a Phosphoserine. Residues Lys360, Lys394, Lys401, Lys406, Lys412, Lys419, Lys424, Lys434, and Lys448 each participate in a glycyl lysine isopeptide (Lys-Gly) (interchain with G-Cter in SUMO2) cross-link.

This sequence belongs to the bZIP family. NFIL3 subfamily. Homodimer. Binds DNA as a dimer. Interacts with DR1. Interacts with PER2 and CRY2. Interacts with NR0B2. Interacts with MYSM1. In terms of tissue distribution, expressed in bladder stomach, thyroid, spinal cord, lymph node, trachea, adrenal gland, bone marrow and muscle.

The protein resides in the nucleus. Its function is as follows. Acts as a transcriptional regulator that recognizes and binds to the sequence 5'-[GA]TTA[CT]GTAA[CT]-3', a sequence present in many cellular and viral promoters. Represses transcription from promoters with activating transcription factor (ATF) sites. Represses promoter activity in osteoblasts. Represses transcriptional activity of PER1. Represses transcriptional activity of PER2 via the B-site on the promoter. Activates transcription from the interleukin-3 promoter in T-cells. Competes for the same consensus-binding site with PAR DNA-binding factors (DBP, HLF and TEF). Component of the circadian clock that acts as a negative regulator for the circadian expression of PER2 oscillation in the cell-autonomous core clock. Protects pro-B cells from programmed cell death. Represses the transcription of CYP2A5. Positively regulates the expression and activity of CES2 by antagonizing the repressive action of NR1D1 on CES2. Required for the development of natural killer cell precursors. This is Nuclear factor interleukin-3-regulated protein (NFIL3) from Homo sapiens (Human).